We begin with the raw amino-acid sequence, 79 residues long: Centromere protein X (79 aa).

Position 1 is an N-acetylmethionine (methionine 1).

Belongs to the CENP-X/MHF2 family. In terms of assembly, heterodimer with CENPX, sometimes called MHF; this interaction stabilizes both partners. MHF heterodimers can assemble to form tetrameric structures. MHF also coassemble with CENPT-CENPW heterodimers at centromeres to form the tetrameric CENP-T-W-S-X complex. Forms a discrete complex with FANCM and CENPX, called FANCM-MHF; this interaction, probably mediated by direct binding between CENPS and FANCM, leads to synergistic activation of double-stranded DNA binding and strongly stimulates FANCM-mediated DNA remodeling. Recruited by FANCM to the Fanconi anemia (FA) core complex, which consists of CENPS, CENPX, FANCA, FANCB, FANCC, FANCE, FANCF, FANCG, FANCL, FANCM, FAAP24 and FAAP100. The FA core complex associates with Bloom syndrome (BLM) complex, which consists of at least BLM, DNA topoisomerase 3-alpha (TOP3A), RMI1/BLAP75, RPA1/RPA70 and RPA2/RPA32. The super complex between FA and BLM is called BRAFT.

Its subcellular location is the nucleus. The protein localises to the chromosome. It is found in the centromere. The protein resides in the kinetochore. Functionally, DNA-binding component of the Fanconi anemia (FA) core complex. Required for the normal activation of the FA pathway, leading to monoubiquitination of the FANCI-FANCD2 complex in response to DNA damage, cellular resistance to DNA cross-linking drugs, and prevention of chromosomal breakage. In complex with CENPS (MHF heterodimer), crucial cofactor for FANCM in both binding and ATP-dependent remodeling of DNA. Stabilizes FANCM. In complex with CENPS and FANCM (but not other FANC proteins), rapidly recruited to blocked forks and promotes gene conversion at blocked replication forks. In complex with CENPS, CENPT and CENPW (CENP-T-W-S-X heterotetramer), involved in the formation of a functional kinetochore outer plate, which is essential for kinetochore-microtubule attachment and faithful mitotic progression. As a component of MHF and CENP-T-W-S-X complexes, binds DNA and bends it to form a nucleosome-like structure. DNA-binding function is fulfilled in the presence of CENPS, with the following preference for DNA substates: Holliday junction &gt; double-stranded &gt; splay arm &gt; single-stranded. Does not bind DNA on its own. The polypeptide is Centromere protein X (CENPX) (Bos taurus (Bovine)).